The following is a 406-amino-acid chain: Plasma serine protease inhibitor (406 aa).

Positions 1–19 (MQLFLLLCLVLLSPQGASL) are cleaved as a signal peptide. A propeptide spans 20-25 (HRHHPR) (removed in mature form). O-linked (GalNAc...) threonine glycosylation occurs at threonine 39. N-linked (GlcNAc...) asparagine glycosylation is found at asparagine 249, asparagine 262, and asparagine 338.

The protein belongs to the serpin family. Forms protease inhibiting heterodimers in extracellular body fluids with serine proteases such as activated protein C/coagulation factor V/F5, acrosin/ACR, chymotrypsinogen B/CTRB1, prothrombin/F2, factor Xa/F10, factor XI/F11, kallikrein/KLKB1, tissue kallikrein, trypsin/PRSS1, prostate specific antigen/KLK3, tissue plasminogen activator/PLAT and urinary plasminogen activator/PLAU. Forms membrane-anchored serine proteases inhibiting heterodimers with TMPRSS7 and TMPRSS11E. Interacts with SEMG2. Post-translationally, N- and O-glycosylated. N-glycosylation consists of a mixture of sialylated bi- (including sialyl-Lewis X epitopes), tri- and tetra-antennary complex-type chains; affects the maximal heparin- and thrombomodulin-enhanced rates of thrombin inhibition. O-glycosylated with core 1 or possibly core 8 glycans. Further modified with 2 sialic acid residues. In terms of processing, proteolytically cleaved. Inhibition of proteases is accompanied by formation of a stable enzyme-inhibitor complex and by degradation of the serpin to lower molecular weight derivatives. Proteolytically cleaved at the N-terminus; inhibits slightly the heparin- and thrombomodulin-enhanced rates of thrombin inhibition. In terms of tissue distribution, predominantly expressed in the epithelium of seminal vesicles. Expressed in the proximal tubular epithelium of the kidney. Expressed in the superficial and more differentiated epidermal keratinocytes of the skin. Expressed in megakaryocytes and platelets. Expressed poorly in kidney tumor cells compared to non tumor kidney tissues. Expressed in spermatozoa. Present in very high concentration in seminal plasma. Present in high concentration in plasma, synovial and Graaf follicle fluids. Present in low concentration in breast milk and in amniotic fluids. Present in very low concentration in urine, cerebrospinal fluids, saliva and tears (at protein level). Strongly expressed in liver. Expressed in kidney, spleen, pancreas, skeletal muscle, heart, testes, ovary, interstitial Leydig cells, epididymal glands, seminal vesicles and prostate.

The protein localises to the secreted. Its subcellular location is the extracellular space. Its activity is regulated as follows. Its inhibitory activity is greatly enhanced in the presence of glycosaminoglycans, heparin, thrombomodulin and phospholipids vesicles. Functionally, heparin-dependent serine protease inhibitor acting in body fluids and secretions. Inactivates serine proteases by binding irreversibly to their serine activation site. Involved in the regulation of intravascular and extravascular proteolytic activities. Plays hemostatic roles in the blood plasma. Acts as a procoagulant and pro-inflammatory factor by inhibiting the anticoagulant activated protein C factor as well as the generation of activated protein C factor by the thrombin/thrombomodulin complex. Acts as an anticoagulant factor by inhibiting blood coagulation factors like prothrombin, factor XI, factor Xa, plasma kallikrein and fibrinolytic enzymes such as tissue- and urinary-type plasminogen activators. In seminal plasma, inactivates several serine proteases implicated in the reproductive system. Inhibits the serpin acrosin; indirectly protects component of the male genital tract from being degraded by excessive released acrosin. Inhibits tissue- and urinary-type plasminogen activator, prostate-specific antigen and kallikrein activities; has a control on the sperm motility and fertilization. Inhibits the activated protein C-catalyzed degradation of SEMG1 and SEMG2; regulates the degradation of semenogelin during the process of transfer of spermatozoa from the male reproductive tract into the female tract. In urine, inhibits urinary-type plasminogen activator and kallikrein activities. Inactivates membrane-anchored serine proteases activities such as MPRSS7 and TMPRSS11E. Inhibits urinary-type plasminogen activator-dependent tumor cell invasion and metastasis. May also play a non-inhibitory role in seminal plasma and urine as a hydrophobic hormone carrier by its binding to retinoic acid. The sequence is that of Plasma serine protease inhibitor (SERPINA5) from Homo sapiens (Human).